A 269-amino-acid chain; its full sequence is Tryptophan synthase alpha chain (269 aa).

Residues Glu41 and Asp52 each act as proton acceptor in the active site.

It belongs to the TrpA family. As to quaternary structure, tetramer of two alpha and two beta chains.

The catalysed reaction is (1S,2R)-1-C-(indol-3-yl)glycerol 3-phosphate + L-serine = D-glyceraldehyde 3-phosphate + L-tryptophan + H2O. It functions in the pathway amino-acid biosynthesis; L-tryptophan biosynthesis; L-tryptophan from chorismate: step 5/5. In terms of biological role, the alpha subunit is responsible for the aldol cleavage of indoleglycerol phosphate to indole and glyceraldehyde 3-phosphate. This chain is Tryptophan synthase alpha chain, found in Geobacillus stearothermophilus (Bacillus stearothermophilus).